The sequence spans 468 residues: Cyclin-dependent kinase 14 (468 aa).

Phosphoserine occurs at positions 24, 77, and 94. The tract at residues 103-132 is disordered; that stretch reads KTSSAGKESPKVRRHSSPSSPTSPKFGKAD. Residue Ser-133 is modified to Phosphoserine. Residues 134–418 form the Protein kinase domain; sequence YEKLEKLGEG…AQAALSHEYF (285 aa). ATP-binding positions include 140–148 and Lys-163; that span reads LGEGSYATV. The active-site Proton acceptor is Asp-255. The segment at 448–468 is disordered; sequence ESMRAFGKNNSYGKSLSNSKH. Positions 455–468 are enriched in polar residues; that stretch reads KNNSYGKSLSNSKH.

Belongs to the protein kinase superfamily. CMGC Ser/Thr protein kinase family. CDC2/CDKX subfamily. In terms of assembly, found in a complex with LRP6, CCNY and CAPRIN2 during G2/M stage; CAPRIN2 functions as a scaffold for the complex by binding to CCNY via its N terminus and to CDK14 via its C terminus. Interacts with CCNY; CCNY mediates its recruitment to the plasma membrane and promotes phosphorylation of LRP6. Interacts with CCDN3 and CDKN1A. Interacts with SEPT8. Interacts with 14-3-3 proteina YWHAB, YWHAE, YWHAH and YWHAQ.

The protein resides in the cell membrane. It is found in the cytoplasm. Its subcellular location is the nucleus. It carries out the reaction L-seryl-[protein] + ATP = O-phospho-L-seryl-[protein] + ADP + H(+). The enzyme catalyses L-threonyl-[protein] + ATP = O-phospho-L-threonyl-[protein] + ADP + H(+). With respect to regulation, serine/threonine-protein kinase activity is promoted by associated cyclins CCDN3 and CCNY and repressed by CDKN1A. Its function is as follows. Serine/threonine-protein kinase involved in the control of the eukaryotic cell cycle, whose activity is controlled by an associated cyclin. Acts as a cell-cycle regulator of Wnt signaling pathway during G2/M phase by mediating the phosphorylation of LRP6 at 'Ser-1490', leading to the activation of the Wnt signaling pathway. Acts as a regulator of cell cycle progression and cell proliferation via its interaction with CCDN3. Phosphorylates RB1 in vitro, however the relevance of such result remains to be confirmed in vivo. May also play a role in meiosis, neuron differentiation and may indirectly act as a negative regulator of insulin-responsive glucose transport. This Dasypus novemcinctus (Nine-banded armadillo) protein is Cyclin-dependent kinase 14 (CDK14).